Consider the following 733-residue polypeptide: MYVMSQTTNTEDTIDLKELFFSLIAQWKLIALCIILSLICALLYLRATPDTYSVNALVQVEENKGASAALLGDLSSMIEQKQPAQAEIEILKSRLVLGNVIQHLNLDLKISGTENSFTDRLLSPHHYQTEYQPKSVLFKDDEKVFDIRQFNIPASFRDKKIELRFKDGQFSLTNTQTEQVILTGKTNQSNTLRTADGLWNISIYTQDQLNDVYLIQKQSLPAAVNNILTNYSVAEKGKLTGILGLNYQGTDKTHITQVLNAILVSYSQQNIERRSAETAQTLKFLDEQLPELKQQLDVAEREFNKFRQQYNTVDVTKESELFLTQSVTLETQKAQLEQQVAEAGAKYTSEHPVMKQMNAQLGAINKKIGELNATLKELPDLQRRYLQLYREVEVKQQLYTALLNSYQQLRIAKAGEIGNVRIVDTAVEPIEPIAPKKLQILILSIFLGGFLGTLLALLRNMMRSGIKDSTQIENELDLPVYATVPRSPVQESRINILKKKKNIPILAVKNSDDIAIESLRSMRTAIHFALSSARNNLITISGPAPEVGKSFISTNLATILAQSDKRVLIIDADLRRGYLHKYFNLDTQPGLTELLNGQQSLETVIRHTEVPGLSVISRGKSPANPSELLSSNQFKNLLEQMSEKFDHVIIDTPPVLAVTDGIIISQYTGVNLVIARYAKTQMKELELTLNRFEQAGVKVNGFILNDIQRSSAGYGYGYGYNYAYAYKANKESD.

Helical transmembrane passes span 19–39 (LFFS…LSLI) and 438–458 (LQIL…LALL). 542 to 550 (GPAPEVGKS) provides a ligand contact to ATP.

It belongs to the etk/wzc family. Requires Mg(2+) as cofactor. It depends on Mn(2+) as a cofactor. Post-translationally, autophosphorylated on several Tyr residues. Dephosphorylated by ptp.

Its subcellular location is the cell inner membrane. The enzyme catalyses L-tyrosyl-[protein] + ATP = O-phospho-L-tyrosyl-[protein] + ADP + H(+). It functions in the pathway glycan metabolism; exopolysaccharide biosynthesis. In terms of biological role, may be involved in the production and the transport of exopolysaccharides. The polypeptide is Tyrosine-protein kinase ptk (ptk) (Acinetobacter johnsonii).